The primary structure comprises 481 residues: Methylenetetrahydrofolate--tRNA-(uracil-5-)-methyltransferase TrmFO (481 aa).

Residue 13 to 18 (GGGLAG) participates in FAD binding.

It belongs to the MnmG family. TrmFO subfamily. Requires FAD as cofactor.

It localises to the cytoplasm. The enzyme catalyses uridine(54) in tRNA + (6R)-5,10-methylene-5,6,7,8-tetrahydrofolate + NADH + H(+) = 5-methyluridine(54) in tRNA + (6S)-5,6,7,8-tetrahydrofolate + NAD(+). It carries out the reaction uridine(54) in tRNA + (6R)-5,10-methylene-5,6,7,8-tetrahydrofolate + NADPH + H(+) = 5-methyluridine(54) in tRNA + (6S)-5,6,7,8-tetrahydrofolate + NADP(+). Its function is as follows. Catalyzes the folate-dependent formation of 5-methyl-uridine at position 54 (M-5-U54) in all tRNAs. The protein is Methylenetetrahydrofolate--tRNA-(uracil-5-)-methyltransferase TrmFO of Agrobacterium fabrum (strain C58 / ATCC 33970) (Agrobacterium tumefaciens (strain C58)).